A 347-amino-acid chain; its full sequence is Anthranilate phosphoribosyltransferase (347 aa).

Residues Gly88, 91-92 (GD), Thr96, 98-101 (NIST), 116-124 (KHGNRSVSS), and Ser128 each bind 5-phospho-alpha-D-ribose 1-diphosphate. Gly88 provides a ligand contact to anthranilate. Ser100 is a binding site for Mg(2+). Asn119 serves as a coordination point for anthranilate. Residue Arg174 coordinates anthranilate. Residues Asp232 and Glu233 each coordinate Mg(2+).

Belongs to the anthranilate phosphoribosyltransferase family. Homodimer. It depends on Mg(2+) as a cofactor.

It carries out the reaction N-(5-phospho-beta-D-ribosyl)anthranilate + diphosphate = 5-phospho-alpha-D-ribose 1-diphosphate + anthranilate. It participates in amino-acid biosynthesis; L-tryptophan biosynthesis; L-tryptophan from chorismate: step 2/5. In terms of biological role, catalyzes the transfer of the phosphoribosyl group of 5-phosphorylribose-1-pyrophosphate (PRPP) to anthranilate to yield N-(5'-phosphoribosyl)-anthranilate (PRA). This Shewanella sp. (strain MR-4) protein is Anthranilate phosphoribosyltransferase.